The following is a 130-amino-acid chain: Small ribosomal subunit protein uS9 (130 aa).

This sequence belongs to the universal ribosomal protein uS9 family.

This chain is Small ribosomal subunit protein uS9, found in Xanthomonas campestris pv. campestris (strain 8004).